We begin with the raw amino-acid sequence, 425 residues long: Adenylosuccinate synthetase (425 aa).

GTP-binding positions include 12-18 and 40-42; these read GDEGKGK and GHT. D13 serves as the catalytic Proton acceptor. The Mg(2+) site is built by D13 and G40. IMP is bound by residues 13–16, 38–41, T129, R143, N221, T236, and R300; these read DEGK and NAGH. H41 acts as the Proton donor in catalysis. Position 296–302 (296–302) interacts with substrate; sequence VTTGRKR. GTP contacts are provided by residues R302, 328–330, and 410–412; these read KLD and GVG.

The protein belongs to the adenylosuccinate synthetase family. In terms of assembly, homodimer. Requires Mg(2+) as cofactor.

The protein localises to the cytoplasm. The enzyme catalyses IMP + L-aspartate + GTP = N(6)-(1,2-dicarboxyethyl)-AMP + GDP + phosphate + 2 H(+). The protein operates within purine metabolism; AMP biosynthesis via de novo pathway; AMP from IMP: step 1/2. Its function is as follows. Plays an important role in the de novo pathway and in the salvage pathway of purine nucleotide biosynthesis. Catalyzes the first committed step in the biosynthesis of AMP from IMP. The protein is Adenylosuccinate synthetase of Phaeosphaeria nodorum (strain SN15 / ATCC MYA-4574 / FGSC 10173) (Glume blotch fungus).